Reading from the N-terminus, the 441-residue chain is Phosphoglucosamine mutase (441 aa).

The active-site Phosphoserine intermediate is Ser-100. The Mg(2+) site is built by Ser-100, Asp-239, Asp-241, and Asp-243. Residue Ser-100 is modified to Phosphoserine.

The protein belongs to the phosphohexose mutase family. Mg(2+) serves as cofactor. In terms of processing, activated by phosphorylation.

It carries out the reaction alpha-D-glucosamine 1-phosphate = D-glucosamine 6-phosphate. Catalyzes the conversion of glucosamine-6-phosphate to glucosamine-1-phosphate. The chain is Phosphoglucosamine mutase from Ruthia magnifica subsp. Calyptogena magnifica.